The chain runs to 901 residues: MRPVRGIARSRILSCSWRGTWTSALTILYLGVYCESTTVTPTTVEDTTVSNGNHSDASRNNTVIRNLTASVDFSQRKLYPYRICSMSMGTDLVRFARTIQCVPFNPRVNSEEGIMLIYKRNILPYVFTAYTYQKELLFQRSYKYVTYDYLLGYSREFVALPMWEIFLVNSRGQCYTSHQRVIGADRYIAYHNDNEVNETMWLMRDDMGNDDTYRYITVKEHARTPGSVWLYKETCSMNCIVTKTKGKSKFPYDMFVLPSGVIVNISPFYNGSNGKTFREQREKFHIWSNYSILKDFGSRALEARIVPKMAFYEREDVVIGWEVNDQSNVTCEMILWETVDRAIRTEYENAFHYVARTLTSTFVENKYSPDNNLTEDDIKCFKNDAQKKIEEVFLRDYNETYDMDGNATYHVTTGGLVIVWQGLKQKSLKALEIAANESAVSATGSNSRRKRSLPDESTGDISYAQLQFAYDTLRTYINQALGHIAEAWCLDQKRTAEVLHELSKINPSNILSAIFGVPVAARVVGDVISLAKCIEVNQSTVLIKGDMRKFSDDGKLEGCYSRPVVWFSMKNSTEVRLGQLGEDNEILLGTHRMETCQTQDYRIFVAGDIGYEFQQYVFTKKINLSEIDIIDTMIALKTEPLENIDFKVLELYSRDELAQANVFDLESIMREYNYQKKRLDFVVERVINPIPPALKGLDEMMNGMGAIGKGIGEAVGAVGGAIGSFIGALVTFVTNPFGAFVVFLFCVGCITLVITVYRRQRRAMQRPFDYFFPYASQTITSSVADSSIAVAYPGPEGTSGDAPPPYPGEAPYGYKDLSVDADTRVSSSSAGAGADFNEEDAVRMLRAIKRLDDKKRQEIEKSSKDSASNKNSETRRRPGIMDRLRRRGGYQKLNTEDDVHV.

The N-terminal stretch at 1–34 (MRPVRGIARSRILSCSWRGTWTSALTILYLGVYC) is a signal peptide. At 35–736 (ESTTVTPTTV…GALVTFVTNP (702 aa)) the chain is on the virion surface side. N-linked (GlcNAc...) asparagine; by host glycosylation is found at Asn-53, Asn-60, and Asn-66. Disulfide bonds link Cys-84-Cys-533, Cys-101-Cys-489, Cys-174-Cys-239, and Cys-331-Cys-380. An involved in fusion and/or binding to host membrane region spans residues 141 to 147 (SYKYVTY). N-linked (GlcNAc...) asparagine; by host glycosylation is present at Asn-197. The segment at 226–233 (GSVWLYKE) is involved in fusion and/or binding to host membrane. N-linked (GlcNAc...) asparagine; by host glycans are attached at residues Asn-270, Asn-289, Asn-328, Asn-372, Asn-398, Asn-406, Asn-436, Asn-537, Asn-571, and Asn-623. Cysteines 559 and 596 form a disulfide. Hydrophobic membrane proximal region regions lie at residues 683–734 (VERV…TFVT) and 714–734 (AVGA…TFVT). A helical membrane pass occupies residues 737 to 757 (FGAFVVFLFCVGCITLVITVY). Residues 758–901 (RRQRRAMQRP…KLNTEDDVHV (144 aa)) are Intravirion-facing. Disordered stretches follow at residues 794 to 813 (GPEG…APYG) and 852 to 901 (DDKK…DVHV). 2 stretches are compositionally biased toward basic and acidic residues: residues 852 to 864 (DDKK…KSSK) and 872 to 883 (SETRRRPGIMDR). Positions 890–893 (YQKL) match the Internalization motif motif.

Belongs to the herpesviridae glycoprotein B family. As to quaternary structure, homotrimer; disulfide-linked. Binds to heparan sulfate proteoglycans. Interacts with gH/gL heterodimer. Post-translationally, a proteolytic cleavage by host furin generates two subunits that remain linked by disulfide bonds.

It is found in the virion membrane. It localises to the host cell membrane. The protein resides in the host endosome membrane. The protein localises to the host Golgi apparatus membrane. Functionally, envelope glycoprotein that forms spikes at the surface of virion envelope. Essential for the initial attachment to heparan sulfate moieties of the host cell surface proteoglycans. Involved in fusion of viral and cellular membranes leading to virus entry into the host cell. Following initial binding to its host receptors, membrane fusion is mediated by the fusion machinery composed at least of gB and the heterodimer gH/gL. May be involved in the fusion between the virion envelope and the outer nuclear membrane during virion egress. This chain is Envelope glycoprotein B, found in Guinea pig cytomegalovirus (strain 22122) (GPCMV).